Reading from the N-terminus, the 382-residue chain is Glutamyl-tRNA reductase (382 aa).

Residues 38–41 (TCNR), S85, 90–92 (ENQ), and Q96 contribute to the substrate site. C39 (nucleophile) is an active-site residue. 164–169 (GAGEIG) is a binding site for NADP(+).

The protein belongs to the glutamyl-tRNA reductase family. Homodimer.

The catalysed reaction is (S)-4-amino-5-oxopentanoate + tRNA(Glu) + NADP(+) = L-glutamyl-tRNA(Glu) + NADPH + H(+). It functions in the pathway porphyrin-containing compound metabolism; protoporphyrin-IX biosynthesis; 5-aminolevulinate from L-glutamyl-tRNA(Glu): step 1/2. In terms of biological role, catalyzes the NADPH-dependent reduction of glutamyl-tRNA(Glu) to glutamate 1-semialdehyde (GSA). This chain is Glutamyl-tRNA reductase, found in Methanococcus maripaludis (strain DSM 14266 / JCM 13030 / NBRC 101832 / S2 / LL).